A 180-amino-acid chain; its full sequence is Lysine-specific demethylase 5C (180 aa).

The segment at 116–159 is disordered; the sequence is PEESLAYSSDAGEGAGHIPKVQGLLENGDSVTSPEKVATEEGSG. At serine 148 the chain carries Phosphoserine.

The protein belongs to the JARID1 histone demethylase family. As to quaternary structure, part of two distinct complexes, one containing E2F6, and the other containing REST. Interacts with ZMYND8. Requires Fe(2+) as cofactor.

Its subcellular location is the nucleus. It catalyses the reaction N(6),N(6),N(6)-trimethyl-L-lysyl(4)-[histone H3] + 3 2-oxoglutarate + 3 O2 = L-lysyl(4)-[histone H3] + 3 formaldehyde + 3 succinate + 3 CO2. Histone demethylase that specifically demethylates 'Lys-4' of histone H3, thereby playing a central role in histone code. Does not demethylate histone H3 'Lys-9', H3 'Lys-27', H3 'Lys-36', H3 'Lys-79' or H4 'Lys-20'. Demethylates trimethylated and dimethylated but not monomethylated H3 'Lys-4'. Participates in transcriptional repression of neuronal genes by recruiting histone deacetylases and REST at neuron-restrictive silencer elements. Represses the CLOCK-BMAL1 heterodimer-mediated transcriptional activation of the core clock component PER2. The protein is Lysine-specific demethylase 5C (KDM5C) of Cricetulus griseus (Chinese hamster).